The primary structure comprises 1407 residues: DNA-directed RNA polymerase subunit beta' (1407 aa).

Positions 70, 72, 85, and 88 each coordinate Zn(2+). Residues Asp-460, Asp-462, and Asp-464 each coordinate Mg(2+). Zn(2+) is bound by residues Cys-814, Cys-888, Cys-895, and Cys-898.

Belongs to the RNA polymerase beta' chain family. As to quaternary structure, the RNAP catalytic core consists of 2 alpha, 1 beta, 1 beta' and 1 omega subunit. When a sigma factor is associated with the core the holoenzyme is formed, which can initiate transcription. Mg(2+) is required as a cofactor. Requires Zn(2+) as cofactor.

It carries out the reaction RNA(n) + a ribonucleoside 5'-triphosphate = RNA(n+1) + diphosphate. Its function is as follows. DNA-dependent RNA polymerase catalyzes the transcription of DNA into RNA using the four ribonucleoside triphosphates as substrates. This chain is DNA-directed RNA polymerase subunit beta', found in Salmonella arizonae (strain ATCC BAA-731 / CDC346-86 / RSK2980).